Reading from the N-terminus, the 377-residue chain is MPFGCVTLGDKKDYNHPTEVSDRYDLGQLIKTEEFCEVFRAKEKSSGKLYTCKRFLKRDGRKVRKAAKNEINILKMVKHHNILQLVDVFETRKEYFIFMELASGREVFDWILDQGYYSEKDTSNVIRQVLEAVAYLHSLCVVHRNLKLENLLYFNRMKNSKIVISDFHLAKVETNSLIKEPCGTPEYLAPEVVARQRYGRPVDCWAIGVIMYILLSGNPPFYDELEEEDYESHDKNLFRKILHGDYEFDSPYWDDISPAAKDLVTRLMEVEQDQRVTAADAISHEWISGNAASDKNIKDGVCAQIEKNFAKAKWKKAVRVTTMMKRLRAPEQTDPGTPSPSKDSDKTPSMATPAPSPANTPAEGAPSLPCPSPDTTG.

The Protein kinase domain occupies 24-287; sequence YDLGQLIKTE…AADAISHEWI (264 aa). Residues 324-377 form a disordered region; the sequence is MKRLRAPEQTDPGTPSPSKDSDKTPSMATPAPSPANTPAEGAPSLPCPSPDTTG. Over residues 347 to 362 the composition is skewed to low complexity; the sequence is TPSMATPAPSPANTPA. The span at 368–377 shows a compositional bias: pro residues; the sequence is LPCPSPDTTG.

This sequence belongs to the protein kinase superfamily. CAMK Ser/Thr protein kinase family. Interacts with calmodulin, in the presence of calcium. Ca(2+) is required as a cofactor.

Its subcellular location is the cytoplasmic vesicle membrane. Its function is as follows. Does not appear to have detectable kinase activity. This Xenopus laevis (African clawed frog) protein is CaM kinase-like vesicle-associated protein (camkv).